A 151-amino-acid polypeptide reads, in one-letter code: SsrA-binding protein (151 aa).

The protein belongs to the SmpB family.

It is found in the cytoplasm. In terms of biological role, required for rescue of stalled ribosomes mediated by trans-translation. Binds to transfer-messenger RNA (tmRNA), required for stable association of tmRNA with ribosomes. tmRNA and SmpB together mimic tRNA shape, replacing the anticodon stem-loop with SmpB. tmRNA is encoded by the ssrA gene; the 2 termini fold to resemble tRNA(Ala) and it encodes a 'tag peptide', a short internal open reading frame. During trans-translation Ala-aminoacylated tmRNA acts like a tRNA, entering the A-site of stalled ribosomes, displacing the stalled mRNA. The ribosome then switches to translate the ORF on the tmRNA; the nascent peptide is terminated with the 'tag peptide' encoded by the tmRNA and targeted for degradation. The ribosome is freed to recommence translation, which seems to be the essential function of trans-translation. In Flavobacterium johnsoniae (strain ATCC 17061 / DSM 2064 / JCM 8514 / BCRC 14874 / CCUG 350202 / NBRC 14942 / NCIMB 11054 / UW101) (Cytophaga johnsonae), this protein is SsrA-binding protein.